The sequence spans 68 residues: Large ribosomal subunit protein uL29 (68 aa).

Belongs to the universal ribosomal protein uL29 family.

This Chloroflexus aurantiacus (strain ATCC 29364 / DSM 637 / Y-400-fl) protein is Large ribosomal subunit protein uL29.